Consider the following 123-residue polypeptide: Small ribosomal subunit protein uS12c (123 aa).

A compositionally biased stretch (polar residues) spans 1 to 20 (MPTIQQLIRNTRQPTQNRTK). A disordered region spans residues 1-27 (MPTIQQLIRNTRQPTQNRTKSPALKAC).

It belongs to the universal ribosomal protein uS12 family. Part of the 30S ribosomal subunit.

Its subcellular location is the plastid. It localises to the chloroplast. In terms of biological role, with S4 and S5 plays an important role in translational accuracy. Located at the interface of the 30S and 50S subunits. The protein is Small ribosomal subunit protein uS12c (rps12) of Zygnema circumcarinatum (Green alga).